We begin with the raw amino-acid sequence, 164 residues long: Putative 4-hydroxy-4-methyl-2-oxoglutarate aldolase (164 aa).

Residues 80–83 and Arg102 each bind substrate; that span reads GGNL. Residue Asp103 participates in a divalent metal cation binding.

The protein belongs to the class II aldolase/RraA-like family. In terms of assembly, homotrimer. It depends on a divalent metal cation as a cofactor.

The enzyme catalyses 4-hydroxy-4-methyl-2-oxoglutarate = 2 pyruvate. The catalysed reaction is oxaloacetate + H(+) = pyruvate + CO2. Functionally, catalyzes the aldol cleavage of 4-hydroxy-4-methyl-2-oxoglutarate (HMG) into 2 molecules of pyruvate. Also contains a secondary oxaloacetate (OAA) decarboxylase activity due to the common pyruvate enolate transition state formed following C-C bond cleavage in the retro-aldol and decarboxylation reactions. The chain is Putative 4-hydroxy-4-methyl-2-oxoglutarate aldolase from Burkholderia multivorans (strain ATCC 17616 / 249).